The primary structure comprises 104 residues: UPF0145 protein VIBHAR_02090 (104 aa).

It belongs to the UPF0145 family.

The protein is UPF0145 protein VIBHAR_02090 of Vibrio campbellii (strain ATCC BAA-1116).